The sequence spans 54 residues: Protein PIGBOS1 (54 aa).

Topologically, residues 1 to 4 (MFRR) are mitochondrial intermembrane. A helical membrane pass occupies residues 5–25 (LTFAQLLFATVLGIAGGVYIF). Residues 26-54 (QPVFEQYAKDQKELKEKMQLVQESEEKKS) are Cytoplasmic-facing. The segment at 30-36 (EQYAKDQ) is required for interaction with CLCC1.

As to quaternary structure, homooligomer. Interacts (via C-terminus) with endoplasmic reticulum (ER) protein CLCC1; the interaction occurs at the mitochondria-associated ER membrane, a zone of contact between the ER and mitochondrial membranes, but does not appear to play a role in ER-mitochondria tethering and is not affected by ER stress.

It localises to the mitochondrion outer membrane. In terms of biological role, plays a role in regulation of the unfolded protein response triggered by endoplasmic reticulum (ER) stress resulting from the presence of unfolded proteins in the ER lumen. This chain is Protein PIGBOS1, found in Homo sapiens (Human).